We begin with the raw amino-acid sequence, 359 residues long: GTP cyclohydrolase FolE2 (359 aa).

The protein belongs to the GTP cyclohydrolase IV family.

The catalysed reaction is GTP + H2O = 7,8-dihydroneopterin 3'-triphosphate + formate + H(+). Its pathway is cofactor biosynthesis; 7,8-dihydroneopterin triphosphate biosynthesis; 7,8-dihydroneopterin triphosphate from GTP: step 1/1. Functionally, converts GTP to 7,8-dihydroneopterin triphosphate. The protein is GTP cyclohydrolase FolE2 of Cereibacter sphaeroides (strain ATCC 17025 / ATH 2.4.3) (Rhodobacter sphaeroides).